The primary structure comprises 201 residues: 3-isopropylmalate dehydratase small subunit (201 aa).

The protein belongs to the LeuD family. LeuD type 1 subfamily. Heterodimer of LeuC and LeuD.

The catalysed reaction is (2R,3S)-3-isopropylmalate = (2S)-2-isopropylmalate. Its pathway is amino-acid biosynthesis; L-leucine biosynthesis; L-leucine from 3-methyl-2-oxobutanoate: step 2/4. Functionally, catalyzes the isomerization between 2-isopropylmalate and 3-isopropylmalate, via the formation of 2-isopropylmaleate. This chain is 3-isopropylmalate dehydratase small subunit, found in Shigella flexneri serotype 5b (strain 8401).